The primary structure comprises 274 residues: 2,3,4,5-tetrahydropyridine-2,6-dicarboxylate N-succinyltransferase (274 aa).

R104 and D141 together coordinate substrate.

Belongs to the transferase hexapeptide repeat family. Homotrimer.

Its subcellular location is the cytoplasm. The catalysed reaction is (S)-2,3,4,5-tetrahydrodipicolinate + succinyl-CoA + H2O = (S)-2-succinylamino-6-oxoheptanedioate + CoA. It participates in amino-acid biosynthesis; L-lysine biosynthesis via DAP pathway; LL-2,6-diaminopimelate from (S)-tetrahydrodipicolinate (succinylase route): step 1/3. This is 2,3,4,5-tetrahydropyridine-2,6-dicarboxylate N-succinyltransferase from Escherichia coli O6:H1 (strain CFT073 / ATCC 700928 / UPEC).